A 348-amino-acid polypeptide reads, in one-letter code: Phenylalanine--tRNA ligase alpha subunit (348 aa).

Mg(2+) is bound at residue Glu-259.

This sequence belongs to the class-II aminoacyl-tRNA synthetase family. Phe-tRNA synthetase alpha subunit type 1 subfamily. In terms of assembly, tetramer of two alpha and two beta subunits. It depends on Mg(2+) as a cofactor.

The protein resides in the cytoplasm. The catalysed reaction is tRNA(Phe) + L-phenylalanine + ATP = L-phenylalanyl-tRNA(Phe) + AMP + diphosphate + H(+). This chain is Phenylalanine--tRNA ligase alpha subunit, found in Limosilactobacillus reuteri (strain DSM 20016) (Lactobacillus reuteri).